A 131-amino-acid chain; its full sequence is uncharacterized protein (131 aa).

A helical transmembrane segment spans residues 17 to 39 (VILLILILLPVVFLHIMLATWGL).

It is found in the membrane. This is an uncharacterized protein from Archaeoglobus fulgidus (strain ATCC 49558 / DSM 4304 / JCM 9628 / NBRC 100126 / VC-16).